The following is a 255-amino-acid chain: MLDSVTHSTFLPNTSFCDPLMSWTDLFSNEEYYPAFEHQTACDSYWTSVHPEYWTKRHVWEWLQFCCDQYKLDANCISFCHFNISGLQLCGMTQEEFMEAAGVCGEYLYFILQSIRSQGYSFFNDPDETKATLKDYADSSCLKTSGIKSQDCHSHSRTSLQSSHLWEFVRDLLLSPEENCGILEWEDREQGIFRVVKSEALAKMWGQRKKNDRMTYEKLSRALRYYYKTGILERVDRRLVYKFGKNAHGWQEDKL.

The 87-residue stretch at Y33–G119 folds into the PNT domain. The segment at residues S163–G244 is a DNA-binding region (ETS).

Belongs to the ETS family.

The protein resides in the nucleus. Its function is as follows. Transcriptionally activator that may play a role in regulating the later stages of keratinocytes terminal differentiation. Binds to DNA sequences containing the consensus nucleotide core sequence GGA[AT]. This Bos taurus (Bovine) protein is ETS-related transcription factor Elf-5 (ELF5).